The primary structure comprises 297 residues: uncharacterized protein (297 aa).

The tract at residues 1–29 is disordered; the sequence is MAESKAKNMFQKLSLTPKRNHEHDAGRNI. Residues 19–29 are compositionally biased toward basic and acidic residues; the sequence is RNHEHDAGRNI.

This is an uncharacterized protein from Caenorhabditis elegans.